Consider the following 396-residue polypeptide: Probable protein phosphatase 2C 25 (396 aa).

Residues 32-98 form a disordered region; sequence ESLSLTLSHR…SPPGGVLKRK (67 aa). Residues 44–61 are compositionally biased toward low complexity; it reads QTSSPSSPSTTVSSPKSP. A PPM-type phosphatase domain is found at 139 to 392; that stretch reads GYSVYCKRGR…DDISVMLIPL (254 aa). Residues Asp-175, Gly-176, Asp-338, and Asp-383 each coordinate Mn(2+).

Belongs to the PP2C family. Interacts with MPK4 and MPK6. It depends on Mg(2+) as a cofactor. The cofactor is Mn(2+).

The protein resides in the cytoplasm. Its subcellular location is the nucleus. The enzyme catalyses O-phospho-L-seryl-[protein] + H2O = L-seryl-[protein] + phosphate. The catalysed reaction is O-phospho-L-threonyl-[protein] + H2O = L-threonyl-[protein] + phosphate. Its function is as follows. Protein phosphatase that negatively regulates defense respones. Inactivates MPK4 and MPK6 MAP kinases involved in stress and defense signaling. This Arabidopsis thaliana (Mouse-ear cress) protein is Probable protein phosphatase 2C 25.